Consider the following 326-residue polypeptide: Tetraketide alpha-pyrone reductase 1 (326 aa).

Residues 8 to 32 (VCVTGASGFLASWLVKRLLLEGYEV), Lys44, and Tyr162 contribute to the NADP(+) site.

It belongs to the NAD(P)-dependent epimerase/dehydratase family. Dihydroflavonol-4-reductase subfamily. As to quaternary structure, interacts with 4CLL1/ACOS5, PKSA and PKSB. In terms of tissue distribution, specifically expressed in anther tapetal cells during microspores development.

The protein localises to the cytoplasm. It is found in the nucleus. It localises to the endoplasmic reticulum. Its function is as follows. Involved in the biosynthesis of hydroxylated tetraketide compounds that serve as sporopollenin precursors (the main constituents of exine). Is essential for pollen wall development. Acts on tetraketide alpha-pyrones and reduces the carbonyl function on the tetraketide alkyl chain to a secondary alcohol function. The sequence is that of Tetraketide alpha-pyrone reductase 1 (TKPR1) from Arabidopsis thaliana (Mouse-ear cress).